The following is a 513-amino-acid chain: Cytochrome P450 1A2 (513 aa).

Residue Ser-68 is glycosylated (O-linked (GlcNAc) serine). Cys-456 contacts heme.

This sequence belongs to the cytochrome P450 family. Interacts with PGRMC1; the interaction requires PGRMC1 homodimerization. It depends on heme as a cofactor.

The protein resides in the endoplasmic reticulum membrane. Its subcellular location is the microsome membrane. It catalyses the reaction an organic molecule + reduced [NADPH--hemoprotein reductase] + O2 = an alcohol + oxidized [NADPH--hemoprotein reductase] + H2O + H(+). The catalysed reaction is 17beta-estradiol + reduced [NADPH--hemoprotein reductase] + O2 = 2-hydroxy-17beta-estradiol + oxidized [NADPH--hemoprotein reductase] + H2O + H(+). The enzyme catalyses 17beta-estradiol + reduced [NADPH--hemoprotein reductase] + O2 = 4-hydroxy-17beta-estradiol + oxidized [NADPH--hemoprotein reductase] + H2O + H(+). It carries out the reaction estrone + reduced [NADPH--hemoprotein reductase] + O2 = 2-hydroxyestrone + oxidized [NADPH--hemoprotein reductase] + H2O + H(+). It catalyses the reaction estrone + reduced [NADPH--hemoprotein reductase] + O2 = 4-hydroxyestrone + oxidized [NADPH--hemoprotein reductase] + H2O + H(+). The catalysed reaction is cholesterol + reduced [NADPH--hemoprotein reductase] + O2 = 25-hydroxycholesterol + oxidized [NADPH--hemoprotein reductase] + H2O + H(+). The enzyme catalyses all-trans-retinol + reduced [NADPH--hemoprotein reductase] + O2 = all-trans-retinal + oxidized [NADPH--hemoprotein reductase] + 2 H2O + H(+). It carries out the reaction all-trans-retinal + reduced [NADPH--hemoprotein reductase] + O2 = all-trans-retinoate + oxidized [NADPH--hemoprotein reductase] + H2O + 2 H(+). It catalyses the reaction (5Z,8Z,11Z,14Z)-eicosatetraenoate + reduced [NADPH--hemoprotein reductase] + O2 = (14R,15S)-epoxy-(5Z,8Z,11Z)-eicosatrienoate + oxidized [NADPH--hemoprotein reductase] + H2O + H(+). The catalysed reaction is (5Z,8Z,11Z,14Z)-eicosatetraenoate + reduced [NADPH--hemoprotein reductase] + O2 = (14S,15R)-epoxy-(5Z,8Z,11Z)-eicosatrienoate + oxidized [NADPH--hemoprotein reductase] + H2O + H(+). The enzyme catalyses (5Z,8Z,11Z,14Z,17Z)-eicosapentaenoate + reduced [NADPH--hemoprotein reductase] + O2 = (17R,18S)-epoxy-(5Z,8Z,11Z,14Z)-eicosatetraenoate + oxidized [NADPH--hemoprotein reductase] + H2O + H(+). It carries out the reaction (4Z,7Z,10Z,13Z,16Z,19Z)-docosahexaenoate + reduced [NADPH--hemoprotein reductase] + O2 = (19R,20S)-epoxy-(4Z,7Z,10Z,13Z,16Z)-docosapentaenoate + oxidized [NADPH--hemoprotein reductase] + H2O + H(+). It catalyses the reaction (5S)-hydroperoxy-(6E,8Z,11Z,14Z)-eicosatetraenoate = 5-oxo-(6E,8Z,11Z,14Z)-eicosatetraenoate + H2O. The catalysed reaction is (12S)-hydroperoxy-(5Z,8Z,10E,14Z)-eicosatetraenoate = 12-oxo-(5Z,8Z,10E,14Z)-eicosatetraenoate + H2O. The enzyme catalyses (15S)-hydroperoxy-(5Z,8Z,11Z,13E)-eicosatetraenoate = 15-oxo-(5Z,8Z,11Z,13E)-eicosatetraenoate + H2O. It carries out the reaction (13S)-hydroperoxy-(9Z,11E)-octadecadienoate = 13-oxo-(9Z,11E)-octadecadienoate + H2O. It catalyses the reaction (5Z,8Z,11Z,14Z)-eicosatetraenoate + reduced [NADPH--hemoprotein reductase] + O2 = 13-hydroxy-(5Z,8Z,11Z,14Z)-eicosatetraenoate + oxidized [NADPH--hemoprotein reductase] + H2O + H(+). The catalysed reaction is (5Z,8Z,11Z,14Z)-eicosatetraenoate + reduced [NADPH--hemoprotein reductase] + O2 = 19-hydroxy-(5Z,8Z,11Z,14Z)-eicosatetraenoate + oxidized [NADPH--hemoprotein reductase] + H2O + H(+). The enzyme catalyses (9Z,12Z)-octadecadienoate + reduced [NADPH--hemoprotein reductase] + O2 = 11-hydroxy-(9Z,12Z)-octadecadienoate + oxidized [NADPH--hemoprotein reductase] + H2O + H(+). It functions in the pathway cofactor metabolism; retinol metabolism. It participates in steroid metabolism; cholesterol metabolism. The protein operates within lipid metabolism; arachidonate metabolism. A cytochrome P450 monooxygenase involved in the metabolism of various endogenous substrates, including fatty acids, steroid hormones and vitamins. Mechanistically, uses molecular oxygen inserting one oxygen atom into a substrate, and reducing the second into a water molecule, with two electrons provided by NADPH via cytochrome P450 reductase (NADPH--hemoprotein reductase). Catalyzes the hydroxylation of carbon-hydrogen bonds. Exhibits high catalytic activity for the formation of hydroxyestrogens from estrone (E1) and 17beta-estradiol (E2), namely 2-hydroxy E1 and E2. Metabolizes cholesterol toward 25-hydroxycholesterol, a physiological regulator of cellular cholesterol homeostasis. May act as a major enzyme for all-trans retinoic acid biosynthesis in the liver. Catalyzes two successive oxidative transformation of all-trans retinol to all-trans retinal and then to the active form all-trans retinoic acid. Primarily catalyzes stereoselective epoxidation of the last double bond of polyunsaturated fatty acids (PUFA), displaying a strong preference for the (R,S) stereoisomer. Catalyzes bisallylic hydroxylation and omega-1 hydroxylation of PUFA. May also participate in eicosanoids metabolism by converting hydroperoxide species into oxo metabolites (lipoxygenase-like reaction, NADPH-independent). Plays a role in the oxidative metabolism of xenobiotics. Catalyzes the N-hydroxylation of heterocyclic amines and the O-deethylation of phenacetin. Metabolizes caffeine via N3-demethylation. This is Cytochrome P450 1A2 (Cyp1a2) from Rattus norvegicus (Rat).